We begin with the raw amino-acid sequence, 491 residues long: Transmembrane protein 200A (491 aa).

Over 1 to 61 (MIATGGVITG…RGKIRLYSPS (61 aa)) the chain is Cytoplasmic. Residues 16–41 (RQDSARSQQHVNLSPSPATQEKKPIR) are disordered. Residues 20 to 34 (ARSQQHVNLSPSPAT) are compositionally biased toward polar residues. A helical membrane pass occupies residues 62 to 82 (GFFLILGVLISIIGIAMAVLG). At 83–126 (YWPQKEHFIDAETTLSTNETQVIRNEGGVVVRFFEQHLHSDKMK) the chain is on the extracellular side. N-linked (GlcNAc...) asparagine glycosylation occurs at N100. The helical transmembrane segment at 127–147 (MLGPFTMGIGIFIFICANAIL) threads the bilayer. The Cytoplasmic portion of the chain corresponds to 148 to 491 (HENRDKETKI…LKRGTSETRF (344 aa)). A Phosphoserine modification is found at S350.

This sequence belongs to the TMEM200 family. As to expression, expressed in cerebellum.

Its subcellular location is the membrane. This chain is Transmembrane protein 200A (TMEM200A), found in Homo sapiens (Human).